Reading from the N-terminus, the 802-residue chain is DNA mismatch repair protein MutS (802 aa).

G617–S624 is an ATP binding site.

This sequence belongs to the DNA mismatch repair MutS family.

This protein is involved in the repair of mismatches in DNA. It is possible that it carries out the mismatch recognition step. This protein has a weak ATPase activity. The protein is DNA mismatch repair protein MutS of Buchnera aphidicola subsp. Acyrthosiphon pisum (strain 5A).